Consider the following 465-residue polypeptide: Botryococcus squalene synthase (465 aa).

NADP(+) is bound by residues arginine 48 and arginine 73. Mg(2+) contacts are provided by aspartate 76, glutamate 79, and aspartate 80. Residues arginine 215, lysine 315, and arginine 317 each contribute to the NADP(+) site. 2 consecutive transmembrane segments (helical) span residues 395–415 (AIRL…FNLG) and 429–449 (ILDL…LLVL).

This sequence belongs to the phytoene/squalene synthase family.

The protein resides in the membrane. It catalyses the reaction presqualene diphosphate + NADPH + H(+) = squalene + diphosphate + NADP(+). Functionally, produces squalene when coexpressed with SSL-1 and bisfarnesyl ether and a very small amount of squalene when incubated alone in the presence of NADPH. The protein is Botryococcus squalene synthase (SSL-2) of Botryococcus braunii (Green alga).